The primary structure comprises 83 residues: U3-theraphotoxin-Cg1a (83 aa).

The first 23 residues, 1–23, serve as a signal peptide directing secretion; that stretch reads MRTFTLIAILTCAVLVIFHAAAA. The propeptide occupies 24–44; that stretch reads EELEAQDVIETEALATLDEER. Intrachain disulfides connect C48-C61, C52-C75, and C69-C80.

It belongs to the neurotoxin 12 (Hwtx-2) family. 03 (juruin) subfamily. Contains 3 disulfide bonds. Two different connectivities are observed in similar proteins (C1-C3, C2-C5, C4-C6 or C1-C4, C2-C5, C3-C6). Expressed by the venom gland.

Its subcellular location is the secreted. In terms of biological role, probable ion channel inhibitor. The protein is U3-theraphotoxin-Cg1a of Chilobrachys guangxiensis (Chinese earth tiger tarantula).